Consider the following 454-residue polypeptide: tRNA modification GTPase MnmE (454 aa).

(6S)-5-formyl-5,6,7,8-tetrahydrofolate-binding residues include Arg23, Glu80, and Lys120. Positions 216-377 (GMKVVIAGRP…LRNHLKQSMG (162 aa)) constitute a TrmE-type G domain. K(+) is bound at residue Asn226. GTP-binding positions include 226 to 231 (NAGKSS), 245 to 251 (TDIAGTT), 270 to 273 (DTAG), 335 to 338 (NKAD), and 358 to 360 (SAR). A Mg(2+)-binding site is contributed by Ser230. Thr245, Ile247, and Thr250 together coordinate K(+). Thr251 lines the Mg(2+) pocket. Residue Lys454 coordinates (6S)-5-formyl-5,6,7,8-tetrahydrofolate.

It belongs to the TRAFAC class TrmE-Era-EngA-EngB-Septin-like GTPase superfamily. TrmE GTPase family. Homodimer. Heterotetramer of two MnmE and two MnmG subunits. K(+) is required as a cofactor.

Its subcellular location is the cytoplasm. In terms of biological role, exhibits a very high intrinsic GTPase hydrolysis rate. Involved in the addition of a carboxymethylaminomethyl (cmnm) group at the wobble position (U34) of certain tRNAs, forming tRNA-cmnm(5)s(2)U34. This chain is tRNA modification GTPase MnmE, found in Salmonella gallinarum (strain 287/91 / NCTC 13346).